Consider the following 293-residue polypeptide: MGFVPMAPLLADAKKDSYAIGQFNINGLQWAKAILAGAESQQSPVIAAASDRLIDYLGGFQTVVAMMGALTDELGITVPVVLHLDHGLSIERCKKAVDAGFSSVMFDGSHYPINENIDMTKEVVAYAHAHNVSVEGEVGTVGGMEDGLMAEIKYADVEECQRFVCETNVDALAAALGSVHGKYKGEPKLGFNEMAAISASTNVPLVLHGASGIPDEQLQRAIKLGHAKININTECMIAWSDACRTTFAEQETAFEPRLLLQEGLAMVQATVEKKIKQFGAANKAAGSASLQRR.

Residue aspartate 85 is the Proton donor of the active site. Residues histidine 86 and histidine 180 each contribute to the Zn(2+) site. Glycine 181 contacts dihydroxyacetone phosphate. Position 208 (histidine 208) interacts with Zn(2+). Dihydroxyacetone phosphate contacts are provided by residues 209–211 (GAS) and 230–233 (NINT). Threonine 233 bears the Phosphothreonine mark.

Belongs to the class II fructose-bisphosphate aldolase family. IolJ subfamily. The cofactor is Zn(2+).

It carries out the reaction 6-phospho-5-dehydro-2-deoxy-D-gluconate = 3-oxopropanoate + dihydroxyacetone phosphate. It functions in the pathway polyol metabolism; myo-inositol degradation into acetyl-CoA; acetyl-CoA from myo-inositol: step 6/7. Functionally, produces dihydroxyacetone phosphate (DHAP or glycerone phosphate) and malonic semialdehyde (MSA or 3-oxopropanoate) from 6-phospho-5-dehydro-2-deoxy-D-gluconate (DKGP). The sequence is that of 6-phospho-5-dehydro-2-deoxy-D-gluconate aldolase (iolJ) from Shouchella clausii (strain KSM-K16) (Alkalihalobacillus clausii).